Reading from the N-terminus, the 412-residue chain is Serine hydroxymethyltransferase (412 aa).

(6S)-5,6,7,8-tetrahydrofolate is bound by residues Leu120 and 124-126 (GHL). Lys228 carries the N6-(pyridoxal phosphate)lysine modification. A (6S)-5,6,7,8-tetrahydrofolate-binding site is contributed by 353–355 (SPF).

The protein belongs to the SHMT family. Homodimer. Requires pyridoxal 5'-phosphate as cofactor.

It localises to the cytoplasm. The enzyme catalyses (6R)-5,10-methylene-5,6,7,8-tetrahydrofolate + glycine + H2O = (6S)-5,6,7,8-tetrahydrofolate + L-serine. Its pathway is one-carbon metabolism; tetrahydrofolate interconversion. It functions in the pathway amino-acid biosynthesis; glycine biosynthesis; glycine from L-serine: step 1/1. In terms of biological role, catalyzes the reversible interconversion of serine and glycine with tetrahydrofolate (THF) serving as the one-carbon carrier. This reaction serves as the major source of one-carbon groups required for the biosynthesis of purines, thymidylate, methionine, and other important biomolecules. Also exhibits THF-independent aldolase activity toward beta-hydroxyamino acids, producing glycine and aldehydes, via a retro-aldol mechanism. The chain is Serine hydroxymethyltransferase from Lachnoclostridium phytofermentans (strain ATCC 700394 / DSM 18823 / ISDg) (Clostridium phytofermentans).